A 325-amino-acid polypeptide reads, in one-letter code: Olfactory receptor 1S2 (325 aa).

Residues 1–38 (MKTLCSFLQISRNMHQENQTTITEFILLGLSNQAEHQN) lie on the Extracellular side of the membrane. Asparagine 18 carries an N-linked (GlcNAc...) asparagine glycan. A helical membrane pass occupies residues 39–62 (LLFVLFLSMYVVTVVGNGLIIVAI). At 63-70 (SLDIYLHT) the chain is on the cytoplasmic side. Residues 71 to 92 (PMYLFLAYLSFADISSISNSVP) traverse the membrane as a helical segment. Residues 93–113 (KMLVNIQTNSQSISYESCITQ) are Extracellular-facing. Cysteines 110 and 202 form a disulfide. The chain crosses the membrane as a helical span at residues 114 to 133 (MYFSIVFVVTDNLLLGTMAF). The Cytoplasmic portion of the chain corresponds to 134-152 (DHFVAICHPLNYTTFMRAR). The helical transmembrane segment at 153–171 (FGTLLTVISWFLSNIIALT) threads the bilayer. Over 172-208 (HTLLLIQLLFCDHNTLPHFFCDLAPLLKLSCSDTMIN) the chain is Extracellular. A helical transmembrane segment spans residues 209–232 (ELVLFIVGLSVIIFPFVLIFFSYV). The Cytoplasmic segment spans residues 233–249 (CIIRAVLGVSSTQGKWK). Residues 250–272 (AFSTCGSHLTIALLFYGTTVGVY) traverse the membrane as a helical segment. The Extracellular segment spans residues 273–285 (FFPSSTHPEDTDK). The chain crosses the membrane as a helical span at residues 286 to 305 (IGAVLFTVVTPMMNPFIYSL). The Cytoplasmic segment spans residues 306–325 (RNKDMKGALRKLINRKISSL).

Belongs to the G-protein coupled receptor 1 family.

Its subcellular location is the cell membrane. Odorant receptor. The polypeptide is Olfactory receptor 1S2 (OR1S2) (Homo sapiens (Human)).